A 409-amino-acid polypeptide reads, in one-letter code: Isocitrate dehydrogenase [NADP] 1 (409 aa).

Positions 75, 78, 80, and 85 each coordinate NADP(+). Residues Asp-255, Asp-278, and Asp-282 each contribute to the Mn(2+) site. Residues Gly-313, Thr-314, Val-315, His-318, and Asn-331 each contribute to the NADP(+) site.

The protein belongs to the isocitrate and isopropylmalate dehydrogenases family. In terms of assembly, homodimer. Mg(2+) is required as a cofactor. It depends on Mn(2+) as a cofactor.

The enzyme catalyses D-threo-isocitrate + NADP(+) = 2-oxoglutarate + CO2 + NADPH. Catalyzes the oxidative decarboxylation of isocitrate to 2-oxoglutarate and carbon dioxide with the concomitant reduction of NADP(+). The chain is Isocitrate dehydrogenase [NADP] 1 (icd) from Mycobacterium bovis (strain ATCC BAA-935 / AF2122/97).